The sequence spans 148 residues: Cyanate hydratase (148 aa).

Active-site residues include R89, E92, and S115.

The protein belongs to the cyanase family.

It carries out the reaction cyanate + hydrogencarbonate + 3 H(+) = NH4(+) + 2 CO2. Functionally, catalyzes the reaction of cyanate with bicarbonate to produce ammonia and carbon dioxide. The sequence is that of Cyanate hydratase from Sulfurisphaera tokodaii (strain DSM 16993 / JCM 10545 / NBRC 100140 / 7) (Sulfolobus tokodaii).